The chain runs to 923 residues: Transportin-3 (923 aa).

Met1 carries the post-translational modification N-acetylmethionine. Ser74 bears the Phosphoserine mark. Thr896 is modified (phosphothreonine).

Interacts with (GTP-bound) Ran. Interacts with (phosphorylated) SFRS1 and SFRS2; leading to their nuclear import. Interacts with NUP62. Interacts with RBM4. Interacts with CPSF6, promoting its nuclear import. As to quaternary structure, (Microbial infection) Interacts with the HIV-1 pre-integration complex (PIC), which is composed of viral genome, matrix protein, Vpr and integrase. Interacts with HIV-1 integrase protein; the interaction is direct. Expressed in skeletal muscle.

It localises to the nucleus envelope. It is found in the cytoplasm. Importin, which transports target proteins into the nucleus. Specifically mediates the nuclear import of splicing factor serine/arginine (SR) proteins, such as RBM4, SFRS1 and SFRS2, by recognizing phosphorylated SR domains. Also mediates the nuclear import of serine/arginine (SR) protein CPSF6, independently of CPSF6 phosphorylation. The nuclear import process is regulated by the small GTPase Ran that partitions between cytoplasm and nucleus in the predominantly GDP- and GTP-bound form, respectively. Importin associates with target cargo proteins in the cytoplasm, and the competitive binding of GTP-bound Ran induces the release of cargos in the nucleus. Functionally, (Microbial infection) Involved in immunodeficiency virus (HIV-1) infection by importing the pre-integration complex (PIC) into the nucleus. Required for a nuclear maturation step of HIV-1 prior to integration. The polypeptide is Transportin-3 (Homo sapiens (Human)).